Here is a 510-residue protein sequence, read N- to C-terminus: MNKELVLVVDFGGQYNQLIARRVRENRVYCEIVPYTTSIEDIKEKAPKGIIFTGGPNSVYGENAPRVRKELFDLGIPVLGICYGDQLMAHSLEGEVTSPEKREYGKTDVNLDNSSLLFKDMKEKDQCWMSHTDYISKVPKGFKIIATTDECPCAAMENAEKKLYGVQFHPEVEHTLFGKKMLKNFLFNVCNLKGDWSMSSFAEQQIKAIKEKVGDKKVICALSGGVDSSVAAVIVHKAIGKQLTCIFVDHGLLRKDEGDQVEKIFKDQFEMNLIRVNAQDRFLGKLKGVSDPERKRKIIGEEFIRVFEEEAKKLGDISFLVQGTIYPDIVESGTNTSATIKSHHNVGGLPEDMEFKLIEPLRELFKDEVRAVGEELGIPHKLVWRQPFPGPGLAIRVLGEVTEEKLAITREADAIFREEIAKAGLEEKIWQYFACLPNIQSVGVMGDERTYCHTIALRAVTSSDAMTSDWARIPYEVLDKVSRRIVNEVKEVNRIVYDVTSKPPATIEWE.

Residues 5 to 195 (LVLVVDFGGQ…LFNVCNLKGD (191 aa)) form the Glutamine amidotransferase type-1 domain. The active-site Nucleophile is cysteine 82. Residues histidine 169 and glutamate 171 contribute to the active site. In terms of domain architecture, GMPS ATP-PPase spans 196–385 (WSMSSFAEQQ…LGIPHKLVWR (190 aa)). 223-229 (SGGVDSS) contributes to the ATP binding site.

In terms of assembly, homodimer.

It carries out the reaction XMP + L-glutamine + ATP + H2O = GMP + L-glutamate + AMP + diphosphate + 2 H(+). The protein operates within purine metabolism; GMP biosynthesis; GMP from XMP (L-Gln route): step 1/1. Catalyzes the synthesis of GMP from XMP. The sequence is that of GMP synthase [glutamine-hydrolyzing] from Clostridium botulinum (strain Loch Maree / Type A3).